The following is a 35-amino-acid chain: Turgencin-B (35 aa).

2 positions are modified to methionine sulfoxide: methionine 5 and methionine 9. 3 cysteine pairs are disulfide-bonded: cysteine 7–cysteine 31, cysteine 11–cysteine 27, and cysteine 16–cysteine 24. Glycine 35 bears the Glycine amide mark.

Oxidation likely reduces antimicrobial activity against Gram-positive bacteria and Gram-negative bacteria.

Its subcellular location is the secreted. Its function is as follows. Has antimicrobial activity against Gram-positive bacteria (C.glutamicum ATCC 13032 (MIC=1.6 uM) and B.subtilis ATCC 23857 (MIC=1.6 uM)) and Gram-negative bacteria (E.coli ATCC 25922 (MIC=12.5 uM) and P.aeruginosa ATCC 27853 (MIC=25.0 uM)). Displays very low activity against the Gram-positive bacteria S.aureus ATCC 9144 (MIC&gt;100 uM). The protein is Turgencin-B of Synoicum turgens (Colonial ascidian).